The sequence spans 23 residues: Alyteserin-1c (23 aa).

Residue S23 is modified to Serine amide.

In terms of tissue distribution, expressed by the skin glands.

It is found in the secreted. The protein localises to the target cell membrane. Antibacterial peptide with amphipathic alpha-helical structure that shows selective growth-inhibitory activity against Gram-negative bacteria but low hemolytic activity against human erythrocytes (LC(50)=145-220 uM). It is moderately active against the Gram-negative bacteria E.coli (MIC=25 uM), K.pneumoniae (MIC=50 uM), P.aeruginosa (MIC=25 uM), A.baumannii (MIC=6 uM), and is weaky active against the Gram-positive S.aureus (MIC=100-250 uM). This chain is Alyteserin-1c, found in Alytes obstetricans (Common midwife toad).